The primary structure comprises 156 residues: Ribosomal RNA large subunit methyltransferase H (156 aa).

S-adenosyl-L-methionine-binding positions include Leu-73, Gly-104, and 123-128; that span reads IGPLTL.

It belongs to the RNA methyltransferase RlmH family. As to quaternary structure, homodimer.

Its subcellular location is the cytoplasm. The enzyme catalyses pseudouridine(1915) in 23S rRNA + S-adenosyl-L-methionine = N(3)-methylpseudouridine(1915) in 23S rRNA + S-adenosyl-L-homocysteine + H(+). Functionally, specifically methylates the pseudouridine at position 1915 (m3Psi1915) in 23S rRNA. The polypeptide is Ribosomal RNA large subunit methyltransferase H (Xanthomonas oryzae pv. oryzae (strain MAFF 311018)).